Reading from the N-terminus, the 371-residue chain is Carbamoyl phosphate synthase small chain (371 aa).

The segment at Met1–Asn182 is CPSase. Residues Ser49, Gly235, and Gly237 each coordinate L-glutamine. Positions Arg186–Lys371 constitute a Glutamine amidotransferase type-1 domain. Catalysis depends on Cys263, which acts as the Nucleophile. Residues Leu264, Gln267, Asn305, Gly307, and Tyr308 each contribute to the L-glutamine site. Residues His346 and Glu348 contribute to the active site.

This sequence belongs to the CarA family. As to quaternary structure, composed of two chains; the small (or glutamine) chain promotes the hydrolysis of glutamine to ammonia, which is used by the large (or ammonia) chain to synthesize carbamoyl phosphate. Tetramer of heterodimers (alpha,beta)4.

It carries out the reaction hydrogencarbonate + L-glutamine + 2 ATP + H2O = carbamoyl phosphate + L-glutamate + 2 ADP + phosphate + 2 H(+). The enzyme catalyses L-glutamine + H2O = L-glutamate + NH4(+). It functions in the pathway amino-acid biosynthesis; L-arginine biosynthesis; carbamoyl phosphate from bicarbonate: step 1/1. It participates in pyrimidine metabolism; UMP biosynthesis via de novo pathway; (S)-dihydroorotate from bicarbonate: step 1/3. Its function is as follows. Small subunit of the glutamine-dependent carbamoyl phosphate synthetase (CPSase). CPSase catalyzes the formation of carbamoyl phosphate from the ammonia moiety of glutamine, carbonate, and phosphate donated by ATP, constituting the first step of 2 biosynthetic pathways, one leading to arginine and/or urea and the other to pyrimidine nucleotides. The small subunit (glutamine amidotransferase) binds and cleaves glutamine to supply the large subunit with the substrate ammonia. The chain is Carbamoyl phosphate synthase small chain from Pyrococcus furiosus (strain ATCC 43587 / DSM 3638 / JCM 8422 / Vc1).